We begin with the raw amino-acid sequence, 394 residues long: 1-deoxy-D-xylulose 5-phosphate reductoisomerase (394 aa).

NADPH contacts are provided by T14, G15, S16, I17, G40, and N128. K129 contacts 1-deoxy-D-xylulose 5-phosphate. Position 130 (E130) interacts with NADPH. D154 contacts Mn(2+). Residues S155, E156, S180, and H203 each coordinate 1-deoxy-D-xylulose 5-phosphate. Residue E156 participates in Mn(2+) binding. An NADPH-binding site is contributed by G209. The 1-deoxy-D-xylulose 5-phosphate site is built by S216, N221, K222, and E225. Residue E225 participates in Mn(2+) binding.

This sequence belongs to the DXR family. It depends on Mg(2+) as a cofactor. Mn(2+) is required as a cofactor.

The catalysed reaction is 2-C-methyl-D-erythritol 4-phosphate + NADP(+) = 1-deoxy-D-xylulose 5-phosphate + NADPH + H(+). Its pathway is isoprenoid biosynthesis; isopentenyl diphosphate biosynthesis via DXP pathway; isopentenyl diphosphate from 1-deoxy-D-xylulose 5-phosphate: step 1/6. Its function is as follows. Catalyzes the NADPH-dependent rearrangement and reduction of 1-deoxy-D-xylulose-5-phosphate (DXP) to 2-C-methyl-D-erythritol 4-phosphate (MEP). This is 1-deoxy-D-xylulose 5-phosphate reductoisomerase from Xylella fastidiosa (strain M12).